Reading from the N-terminus, the 512-residue chain is Lysine--tRNA ligase (512 aa).

Mg(2+) is bound by residues Glu-408 and Glu-415.

This sequence belongs to the class-II aminoacyl-tRNA synthetase family. In terms of assembly, homodimer. Mg(2+) serves as cofactor.

Its subcellular location is the cytoplasm. It catalyses the reaction tRNA(Lys) + L-lysine + ATP = L-lysyl-tRNA(Lys) + AMP + diphosphate. The protein is Lysine--tRNA ligase of Prochlorococcus marinus subsp. pastoris (strain CCMP1986 / NIES-2087 / MED4).